A 1181-amino-acid chain; its full sequence is Sodium/potassium/calcium exchanger 1 (1181 aa).

Over 1–419 the chain is Extracellular; sequence MGKLIRMGTQ…DLFSVEDRRQ (419 aa). 3 disordered regions span residues 107–232, 255–276, and 300–323; these read AMED…TSLK, SLVGKNTLGSPRRGERNSSTTP, and STPATTEGSTAAQRIGNPLSGTST. The span at 124-136 shows a compositional bias: polar residues; that stretch reads SLKNNYSPTTAGT. Asn-271 carries N-linked (GlcNAc...) asparagine glycosylation. Positions 301–311 are enriched in polar residues; the sequence is TPATTEGSTAA. Residues 420-440 form a helical membrane-spanning segment; sequence GWVVLHIFGMTYVFVALAIVC. Residues 441-464 are Cytoplasmic-facing; the sequence is DEYFVPALGVITDKLQISEDVAGA. One copy of the Alpha-1 repeat lies at 461-501; that stretch reads VAGATFMAAGGSAPELFTSLIGVFISHSNVGIGTIVGSAVF. A helical transmembrane segment spans residues 465–485; it reads TFMAAGGSAPELFTSLIGVFI. Residues 486-491 are Extracellular-facing; sequence SHSNVG. Residues 492–512 traverse the membrane as a helical segment; that stretch reads IGTIVGSAVFNILFVIGTCAL. Over 513–519 the chain is Cytoplasmic; that stretch reads FSREILN. A helical transmembrane segment spans residues 520-544; the sequence is LTWWPLFRDVSFYILDLSMLIVFFL. At 545 to 552 the chain is on the extracellular side; it reads DSLIAWWE. Residues 553 to 569 traverse the membrane as a helical segment; it reads SLLLLLAYALYVFTMKW. Residues 570 to 989 are Cytoplasmic-facing; sequence NKQIERWVKE…SLEWPESRQK (420 aa). The disordered stretch occupies residues 598 to 617; that stretch reads PSDGAIEENEQQDNKKLKLP. Phosphoserine is present on Ser-625. Residues 650 to 983 form a disordered region; sequence GEARPSKDKQ…ESEEPLSLEW (334 aa). Thr-690 carries the phosphothreonine modification. Residues 701–715 are compositionally biased toward acidic residues; the sequence is GDQEEDPGCQEDVDE. A run of 14 repeats spans residues 730–741, 742–754, 755–766, 767–778, 779–791, 792–804, 805–817, 818–830, 831–843, 844–856, 857–869, 870–881, 882–893, and 894–905. 3 stretches are compositionally biased toward basic and acidic residues: residues 730–750, 757–775, and 782–805; these read ETEAEGKKDEEGETEAERKED, ETKGKEKQEGETESEGKDE, and AEGKEADHEGETEAEGKEVEHEGE. A 14 X approximate tandem repeats region spans residues 730–905; the sequence is ETEAEGKKDE…EAGEKDEHEG (176 aa). Residues 806 to 820 are compositionally biased toward acidic residues; sequence TEAEGTEDEQEGETE. Residues 834 to 906 show a composition bias toward basic and acidic residues; that stretch reads AEGKEVEHEV…AGEKDEHEGQ (73 aa). Acidic residues-rich tracts occupy residues 921-931 and 949-979; these read GEAEANAEDQC and GDSEEEEDEEDEEEEEEEEEEEEEEESEEPL. The chain crosses the membrane as a helical span at residues 990-1010; the sequence is QAIYLFLLPIVFPLWLTIPDV. The Extracellular portion of the chain corresponds to 1011–1017; that stretch reads RRQEARK. The helical transmembrane segment at 1018–1038 threads the bilayer; it reads FFVITFLGSIIWIAMFSYLMV. At 1039-1053 the chain is on the cytoplasmic side; that stretch reads WWAHQVGETIGISEE. Residues 1054–1074 form a helical membrane-spanning segment; sequence IMGLTILAAGTSIPDLITSVI. One copy of the Alpha-2 repeat lies at 1061–1092; it reads AAGTSIPDLITSVIVARKGLGDMAVSSSVGSN. At 1075–1092 the chain is on the extracellular side; sequence VARKGLGDMAVSSSVGSN. Residues 1093–1113 traverse the membrane as a helical segment; sequence IFDITVGLPVPWLLFSLINAL. Topologically, residues 1114 to 1121 are cytoplasmic; the sequence is QPIPVSSN. Residues 1122–1142 traverse the membrane as a helical segment; sequence GLFCAIVLLFLMLLFVIFSIA. The Extracellular portion of the chain corresponds to 1143–1150; that stretch reads SCKWRMNK. The chain crosses the membrane as a helical span at residues 1151–1171; the sequence is ILGFTMFLLYFVFLVISVMLE. At 1172–1181 the chain is on the cytoplasmic side; sequence DRIISCPVSV.

This sequence belongs to the Ca(2+):cation antiporter (CaCA) (TC 2.A.19) family. SLC24A subfamily. In terms of processing, the uncleaved signal sequence is required for efficient membrane targeting and proper membrane integration and topology. Highly expressed in the eye.

The protein localises to the cell membrane. It carries out the reaction Ca(2+)(out) + K(+)(out) + 4 Na(+)(in) = Ca(2+)(in) + K(+)(in) + 4 Na(+)(out). Calcium, potassium:sodium antiporter that transports 1 Ca(2+) and 1 K(+) in exchange for 4 Na(+). Critical component of the visual transduction cascade, controlling the calcium concentration of outer segments during light and darkness. Light causes a rapid lowering of cytosolic free calcium in the outer segment of both retinal rod and cone photoreceptors and the light-induced lowering of calcium is caused by extrusion via this protein which plays a key role in the process of light adaptation. This chain is Sodium/potassium/calcium exchanger 1 (Slc24a1), found in Rattus norvegicus (Rat).